The sequence spans 235 residues: NADH-quinone oxidoreductase subunit B 2 (235 aa).

A compositionally biased stretch (low complexity) spans 1 to 14; sequence MGLTSRPTPASRQP. Positions 1–24 are disordered; it reads MGLTSRPTPASRQPASPPPADPVL. Residues cysteine 63, cysteine 64, cysteine 129, and cysteine 159 each contribute to the [4Fe-4S] cluster site. Residues 188 to 235 form a disordered region; it reads TGATGGGPSTDALRSGLVAAPTAPGPTAPASTAPGPTAPAPTQDEERR.

This sequence belongs to the complex I 20 kDa subunit family. In terms of assembly, NDH-1 is composed of 14 different subunits. Subunits NuoB, C, D, E, F, and G constitute the peripheral sector of the complex. [4Fe-4S] cluster is required as a cofactor.

The protein resides in the cell membrane. It carries out the reaction a quinone + NADH + 5 H(+)(in) = a quinol + NAD(+) + 4 H(+)(out). Its function is as follows. NDH-1 shuttles electrons from NADH, via FMN and iron-sulfur (Fe-S) centers, to quinones in the respiratory chain. The immediate electron acceptor for the enzyme in this species is believed to be a menaquinone. Couples the redox reaction to proton translocation (for every two electrons transferred, four hydrogen ions are translocated across the cytoplasmic membrane), and thus conserves the redox energy in a proton gradient. This chain is NADH-quinone oxidoreductase subunit B 2, found in Streptomyces griseus subsp. griseus (strain JCM 4626 / CBS 651.72 / NBRC 13350 / KCC S-0626 / ISP 5235).